The primary structure comprises 241 residues: Small ribosomal subunit protein uS3 (241 aa).

The 69-residue stretch at 39–107 folds into the KH type-2 domain; it reads IREILHKELK…DVVINIVEIR (69 aa). The interval 217 to 241 is disordered; it reads KRMAEGETGGGGDRGGRQRRDNAAV. A compositionally biased stretch (basic and acidic residues) spans 230-241; it reads RGGRQRRDNAAV.

Belongs to the universal ribosomal protein uS3 family. As to quaternary structure, part of the 30S ribosomal subunit. Forms a tight complex with proteins S10 and S14.

Functionally, binds the lower part of the 30S subunit head. Binds mRNA in the 70S ribosome, positioning it for translation. The sequence is that of Small ribosomal subunit protein uS3 from Bradyrhizobium diazoefficiens (strain JCM 10833 / BCRC 13528 / IAM 13628 / NBRC 14792 / USDA 110).